The following is a 142-amino-acid chain: Small ribosomal subunit protein bS6 (142 aa).

A disordered region spans residues 110 to 142 (NKKPSHAKEKHEKTEHAHSHHTEEAGSKESHSE).

It belongs to the bacterial ribosomal protein bS6 family.

Functionally, binds together with bS18 to 16S ribosomal RNA. This Helicobacter acinonychis (strain Sheeba) protein is Small ribosomal subunit protein bS6.